Consider the following 217-residue polypeptide: Nucleoredoxin-like protein 1 (217 aa).

The region spanning 1 to 164 is the Thioredoxin domain; it reads MASLFSGRIL…AAELLDRSFL (164 aa). Basic and acidic residues predominate over residues 188–204; it reads VDRDVGRERGRNGRDSG. A disordered region spans residues 188–217; it reads VDRDVGRERGRNGRDSGDPQGDAGTRAELW.

The protein belongs to the nucleoredoxin family. Interacts with isoform 1 of BSG. As to expression, expressed in the retina (at protein level). Expressed predominantly by photoreceptors in both the inner and outer nuclear layer (at protein level). Not expressed in the testis, spleen, intestine, lung, cerebellum, or kidney.

It is found in the cell projection. Its subcellular location is the cilium. It localises to the photoreceptor outer segment. Plays an important role in retinal cone photoreceptor survival. In association with glucose transporter SLC16A1/GLUT1 and BSG, promotes retinal cone survival by enhancing aerobic glycolysis and accelerating the entry of glucose into photoreceptors. May play a role in cone cell viability, slowing down cone degeneration, does not seem to play a role in degenerating rods. This is Nucleoredoxin-like protein 1 (Nxnl1) from Mus musculus (Mouse).